The primary structure comprises 194 residues: MLEQLMEALRCLPGVGPKSAQRMAFHLLQRDRKGGLQLADALSQAMTEIGHCTECRTFTEEEVCHICTNPKRQENGQICVVESPADIAAVEATGQYSGRYFVLMGHLSPLDGIGPSDIGLDVLDYRLRRGDISEVILATNPTVEGEATAHYIAELCKEHQVEASRIAHGVPVGGELELVDGTTLSHSLLGRHKI.

The C4-type zinc finger occupies 52–67 (CTECRTFTEEEVCHIC). Residues 76-171 (GQICVVESPA…EASRIAHGVP (96 aa)) form the Toprim domain.

Belongs to the RecR family.

May play a role in DNA repair. It seems to be involved in an RecBC-independent recombinational process of DNA repair. It may act with RecF and RecO. This chain is Recombination protein RecR, found in Vibrio campbellii (strain ATCC BAA-1116).